An 867-amino-acid chain; its full sequence is Putative tyrosine-protein kinase F09A5.2 (867 aa).

2 helical membrane-spanning segments follow: residues 45 to 65 and 355 to 375; these read VMKI…FATS and LLLI…AFFV. 2 N-linked (GlcNAc...) asparagine glycosylation sites follow: asparagine 395 and asparagine 423. A Protein kinase domain is found at 467–757; it reads VQEDHLLGNG…FNEMRGEITV (291 aa). 473-481 is a binding site for ATP; it reads LGNGAFANV. 2 N-linked (GlcNAc...) asparagine glycosylation sites follow: asparagine 496 and asparagine 500. Lysine 516 is a binding site for ATP. N-linked (GlcNAc...) asparagine glycosylation occurs at asparagine 585. Aspartate 626 functions as the Proton acceptor in the catalytic mechanism. Disordered regions lie at residues 782 to 821 and 848 to 867; these read LTMQ…GTCA and SKSM…TYQS. A compositionally biased stretch (acidic residues) spans 801–810; the sequence is DMDEDGDYDS. Positions 858–867 are enriched in polar residues; the sequence is SNSTVSTYQS. Residue asparagine 859 is glycosylated (N-linked (GlcNAc...) asparagine).

It belongs to the protein kinase superfamily. Tyr protein kinase family.

The protein localises to the membrane. It catalyses the reaction L-tyrosyl-[protein] + ATP = O-phospho-L-tyrosyl-[protein] + ADP + H(+). The sequence is that of Putative tyrosine-protein kinase F09A5.2 from Caenorhabditis elegans.